A 309-amino-acid polypeptide reads, in one-letter code: Sulfate adenylyltransferase subunit 2 (309 aa).

This sequence belongs to the PAPS reductase family. CysD subfamily. As to quaternary structure, heterodimer composed of CysD, the smaller subunit, and CysN.

The enzyme catalyses sulfate + ATP + H(+) = adenosine 5'-phosphosulfate + diphosphate. Its pathway is sulfur metabolism; hydrogen sulfide biosynthesis; sulfite from sulfate: step 1/3. Its function is as follows. With CysN forms the ATP sulfurylase (ATPS) that catalyzes the adenylation of sulfate producing adenosine 5'-phosphosulfate (APS) and diphosphate, the first enzymatic step in sulfur assimilation pathway. APS synthesis involves the formation of a high-energy phosphoric-sulfuric acid anhydride bond driven by GTP hydrolysis by CysN coupled to ATP hydrolysis by CysD. This Mycolicibacterium gilvum (strain PYR-GCK) (Mycobacterium gilvum (strain PYR-GCK)) protein is Sulfate adenylyltransferase subunit 2.